We begin with the raw amino-acid sequence, 398 residues long: MNIPSIENCDLHNKTVLLRVDFNVPIKDGEIRDVTRILRALPTIQYLVNASAKIIIISHFGRPKARDNNLSLKNVIDTLSQLLNKKVKFIDDCFGEKVQRAVSVMDAGDIILLENLRFYKEEEQSDSNFAKQLASLADIYVNDAFSCSHRAHASISRITEFLPSYAGFCLQDELKYLEKAVSFKAKPITAIVGGAKISTKIKVLMKLTEKVNYLVLGGAIANNFLSFSKVNIGKSFFQNGVDDLLHNILETANKNNCKIVVPEDVLVAVNSDYSTSISRRTESILDGDIILDIGPQTLSTISSIIASSKTLLWNGPIGVFEHSAFASGTIGVMKIVSDLTHKGKLTSIIGGGDSLSAISAAGLADKDFTYVSTGGGAFLDWLSGDEMPGVAALQKRLD.

Residues aspartate 21–asparagine 23, arginine 36, histidine 59–arginine 62, arginine 117, and arginine 150 each bind substrate. ATP is bound by residues lysine 200, glutamate 321, and glycine 351–serine 354.

This sequence belongs to the phosphoglycerate kinase family. Monomer.

The protein localises to the cytoplasm. It carries out the reaction (2R)-3-phosphoglycerate + ATP = (2R)-3-phospho-glyceroyl phosphate + ADP. Its pathway is carbohydrate degradation; glycolysis; pyruvate from D-glyceraldehyde 3-phosphate: step 2/5. In Wolbachia pipientis wMel, this protein is Phosphoglycerate kinase.